Reading from the N-terminus, the 732-residue chain is Engulfment and cell motility protein 2 (732 aa).

Y48 carries the post-translational modification Phosphotyrosine. Positions 323-497 constitute an ELMO domain; sequence AQRDIIFELR…VVREQITRAL (175 aa). A Phosphoserine modification is found at S515. The PH domain maps to 565–686; sequence SSFRKIGNRR…LLGKDMSSEL (122 aa). The SH3-binding signature appears at 712–719; it reads PEAPPPVP. Y729 is modified (phosphotyrosine).

As to quaternary structure, interacts directly with the SH3-domain of DOCK1 via its SH3-binding site. Probably forms a heterotrimeric complex with DOCK1 and RAC1. Interacts with ARHGEF16, DOCK4 and EPHA2; mediates activation of RAC1 by EPHA2. Interacts with ADGRB3. Interacts with AUTS2; the interaction is direct.

The protein resides in the cytoplasm. Its subcellular location is the cytosol. The protein localises to the membrane. Functionally, involved in cytoskeletal rearrangements required for phagocytosis of apoptotic cells and cell motility. Acts in association with DOCK1 and CRK. Was initially proposed to be required in complex with DOCK1 to activate Rac Rho small GTPases. May enhance the guanine nucleotide exchange factor (GEF) activity of DOCK1. This chain is Engulfment and cell motility protein 2 (Elmo2), found in Mus musculus (Mouse).